Reading from the N-terminus, the 339-residue chain is Phenylalanine--tRNA ligase alpha subunit (339 aa).

Glutamate 247 lines the Mg(2+) pocket.

Belongs to the class-II aminoacyl-tRNA synthetase family. Phe-tRNA synthetase alpha subunit type 1 subfamily. Tetramer of two alpha and two beta subunits. The cofactor is Mg(2+).

The protein resides in the cytoplasm. The catalysed reaction is tRNA(Phe) + L-phenylalanine + ATP = L-phenylalanyl-tRNA(Phe) + AMP + diphosphate + H(+). This is Phenylalanine--tRNA ligase alpha subunit from Deinococcus geothermalis (strain DSM 11300 / CIP 105573 / AG-3a).